Reading from the N-terminus, the 414-residue chain is Probable mannose-1-phosphate guanyltransferase (414 aa).

The protein belongs to the transferase hexapeptide repeat family.

The protein localises to the cytoplasm. It is found in the nucleus. It catalyses the reaction alpha-D-mannose 1-phosphate + GTP + H(+) = GDP-alpha-D-mannose + diphosphate. The protein operates within nucleotide-sugar biosynthesis; GDP-alpha-D-mannose biosynthesis; GDP-alpha-D-mannose from alpha-D-mannose 1-phosphate (GTP route): step 1/1. Involved in cell wall synthesis where it is required for glycosylation. The chain is Probable mannose-1-phosphate guanyltransferase from Schizosaccharomyces pombe (strain 972 / ATCC 24843) (Fission yeast).